We begin with the raw amino-acid sequence, 149 residues long: Large ribosomal subunit protein bL9 (149 aa).

This sequence belongs to the bacterial ribosomal protein bL9 family.

Binds to the 23S rRNA. The chain is Large ribosomal subunit protein bL9 from Aliivibrio salmonicida (strain LFI1238) (Vibrio salmonicida (strain LFI1238)).